Consider the following 981-residue polypeptide: Alpha-mannosidase (981 aa).

Residues His23, Asp25, and Asp145 each contribute to the Zn(2+) site. The active-site Nucleophile is the Asp145. N-linked (GlcNAc...) asparagine glycosylation occurs at Asn312. His386 contributes to the Zn(2+) binding site. 3 cysteine pairs are disulfide-bonded: Cys422–Cys432, Cys442–Cys450, and Cys800–Cys807. The N-linked (GlcNAc...) asparagine glycan is linked to Asn446. The tract at residues 938 to 957 is disordered; that stretch reads KKMKWSVEGDNEQEPQAVRG.

This sequence belongs to the glycosyl hydrolase 38 family. Dimer of dimers of heavy and light subunits. It depends on Zn(2+) as a cofactor. Produced as a precursor which is then proteolytically cleaved into a 66kD heavy subunit and a 44kD light subunit. Cleavage probably occurs in protein bodies/protein storage vacuoles.

It is found in the protein storage vacuole. The enzyme catalyses Hydrolysis of terminal, non-reducing alpha-D-mannose residues in alpha-D-mannosides.. Inhibited by 2,3,4,6-tetra-O-acetyl-5-fluoro-beta-L-gulopyranosyl fluoride which acts as a slow substrate, doubling as a competitive inhibitor as it forms a high steady state concentration of glycosyl-enzyme intermediate that blocks the active site. Inhibited by 2,3,4,6-tetra-O-acetyl-5-fluoro-alpha-D-mannopyranosyl fluoride which also acts as a slow substrate but no intermediates accumulate. Inhibited by EDTA. Inhibited by metal ion Cu(2+). Inhibited by metal ions Fe(2+), Cd(2+) and Co(2+). Inhibited by metal ions Ag(+) and Hg(2+). Competitively inhibited by mannono-1-4-lactone and mannono-1-5-lactone. Inhibited by swainsonine but not by 1-desoxymannojirimycin. Inhibited by pyrrolidine-3,4-diol derivatives. Liberates mannose from p-nitrophenyl-alpha-D-mannoside. Liberates mannose from further alpha-D-mannosides including methyl-, benzyl-alpha-D-mannoside, 1-6-linked di-, tri- and tetrasaccharides of alpha-D-mannose and mannosyl-rhamnose. Liberates mannose from various glycoproteins like ovalbumin and ovomucoid. Does not hydrolyze beta-D-mannosides. Has glycosyltransferase activity, forming disaccharides from mannose and lyxose but not from glucose, galactose, ribose, xylose or arabinose. The sequence is that of Alpha-mannosidase from Canavalia ensiformis (Jack bean).